A 163-amino-acid polypeptide reads, in one-letter code: Lipoprotein signal peptidase (163 aa).

The next 3 membrane-spanning stretches (helical) occupy residues 7 to 27 (LSFLWLSAVAFVIDLLTKYLV), 64 to 84 (WQKYFFIALALIISAVLVYLL), and 99 to 119 (ALIIGGALANMADRAYHGFVV). Catalysis depends on residues Asp120 and Asp138. A helical membrane pass occupies residues 133-153 (VFNVADIAICVGVGLLILDSF).

This sequence belongs to the peptidase A8 family.

It localises to the cell inner membrane. The enzyme catalyses Release of signal peptides from bacterial membrane prolipoproteins. Hydrolyzes -Xaa-Yaa-Zaa-|-(S,diacylglyceryl)Cys-, in which Xaa is hydrophobic (preferably Leu), and Yaa (Ala or Ser) and Zaa (Gly or Ala) have small, neutral side chains.. The protein operates within protein modification; lipoprotein biosynthesis (signal peptide cleavage). Its function is as follows. This protein specifically catalyzes the removal of signal peptides from prolipoproteins. The protein is Lipoprotein signal peptidase of Actinobacillus succinogenes (strain ATCC 55618 / DSM 22257 / CCUG 43843 / 130Z).